A 489-amino-acid chain; its full sequence is Rhamnulokinase (489 aa).

Residue 13–17 coordinates ATP; that stretch reads ASSGR. Cys68 and Cys222 are oxidised to a cystine. Substrate contacts are provided by residues Gly83 and 236–238; that span reads HDT. Asp237 serves as the catalytic Proton acceptor. ATP is bound at residue Thr259. Asn296 contacts substrate. An ATP-binding site is contributed by Gln304. Cys353 and Cys370 form a disulfide bridge. ATP is bound at residue Gly402. Cysteines 413 and 417 form a disulfide.

This sequence belongs to the rhamnulokinase family. The cofactor is Mg(2+).

The enzyme catalyses L-rhamnulose + ATP = L-rhamnulose 1-phosphate + ADP + H(+). It participates in carbohydrate degradation; L-rhamnose degradation; glycerone phosphate from L-rhamnose: step 2/3. Functionally, involved in the catabolism of L-rhamnose (6-deoxy-L-mannose). Catalyzes the transfer of the gamma-phosphate group from ATP to the 1-hydroxyl group of L-rhamnulose to yield L-rhamnulose 1-phosphate. This chain is Rhamnulokinase, found in Salmonella schwarzengrund (strain CVM19633).